The chain runs to 168 residues: Photosystem I assembly protein Ycf3 (168 aa).

3 TPR repeats span residues 35–68, 72–105, and 120–153; these read AFTYYRDGMSAQSEGNYAEALQNYYEAMRLEIDP, SYILYNIGLIHTSNGEHTKALEYYFRALERNPFL, and GEQAIQQGDSEIAEAWFDQAAEYWKQAIALTPGN.

Belongs to the Ycf3 family.

The protein localises to the plastid. Its subcellular location is the chloroplast thylakoid membrane. Functionally, essential for the assembly of the photosystem I (PSI) complex. May act as a chaperone-like factor to guide the assembly of the PSI subunits. The protein is Photosystem I assembly protein Ycf3 of Solanum bulbocastanum (Wild potato).